Consider the following 424-residue polypeptide: Serpin A11 (424 aa).

A signal peptide spans 1 to 21 (MGPVWLWLWLLVAEVLLPVHC). 4 N-linked (GlcNAc...) asparagine glycosylation sites follow: asparagine 108, asparagine 171, asparagine 352, and asparagine 387.

Belongs to the serpin family.

Its subcellular location is the secreted. The chain is Serpin A11 (Serpina11) from Mus musculus (Mouse).